Here is a 158-residue protein sequence, read N- to C-terminus: S-ribosylhomocysteine lyase (158 aa).

Fe cation contacts are provided by His54, His58, and Cys124.

The protein belongs to the LuxS family. As to quaternary structure, homodimer. It depends on Fe cation as a cofactor.

The enzyme catalyses S-(5-deoxy-D-ribos-5-yl)-L-homocysteine = (S)-4,5-dihydroxypentane-2,3-dione + L-homocysteine. Its function is as follows. Involved in the synthesis of autoinducer 2 (AI-2) which is secreted by bacteria and is used to communicate both the cell density and the metabolic potential of the environment. The regulation of gene expression in response to changes in cell density is called quorum sensing. Catalyzes the transformation of S-ribosylhomocysteine (RHC) to homocysteine (HC) and 4,5-dihydroxy-2,3-pentadione (DPD). In Limosilactobacillus reuteri (Lactobacillus reuteri), this protein is S-ribosylhomocysteine lyase.